The sequence spans 198 residues: Carnitine operon protein CaiE (198 aa).

The tract at residues 179-198 (VEENRPRLKGTTDVKPKSAQ) is disordered. The segment covering 180-198 (EENRPRLKGTTDVKPKSAQ) has biased composition (basic and acidic residues).

This sequence belongs to the transferase hexapeptide repeat family.

The protein operates within amine and polyamine metabolism; carnitine metabolism. Its function is as follows. Overproduction of CaiE stimulates the activity of CaiB and CaiD. The sequence is that of Carnitine operon protein CaiE from Salmonella typhi.